We begin with the raw amino-acid sequence, 331 residues long: Biotin synthase (331 aa).

In terms of domain architecture, Radical SAM core spans 53–271 (TELQLSQLLS…IAVARIVCPK (219 aa)). The [4Fe-4S] cluster site is built by Cys-68, Cys-72, and Cys-75. Cys-112, Cys-143, Cys-203, and Arg-275 together coordinate [2Fe-2S] cluster.

Belongs to the radical SAM superfamily. Biotin synthase family. Homodimer. The cofactor is [4Fe-4S] cluster. Requires [2Fe-2S] cluster as cofactor.

The catalysed reaction is (4R,5S)-dethiobiotin + (sulfur carrier)-SH + 2 reduced [2Fe-2S]-[ferredoxin] + 2 S-adenosyl-L-methionine = (sulfur carrier)-H + biotin + 2 5'-deoxyadenosine + 2 L-methionine + 2 oxidized [2Fe-2S]-[ferredoxin]. The protein operates within cofactor biosynthesis; biotin biosynthesis; biotin from 7,8-diaminononanoate: step 2/2. Its function is as follows. Catalyzes the conversion of dethiobiotin (DTB) to biotin by the insertion of a sulfur atom into dethiobiotin via a radical-based mechanism. In Phenylobacterium zucineum (strain HLK1), this protein is Biotin synthase.